A 297-amino-acid polypeptide reads, in one-letter code: 4-hydroxy-tetrahydrodipicolinate synthase (297 aa).

Thr-47 contacts pyruvate. The Proton donor/acceptor role is filled by Tyr-135. Lys-163 serves as the catalytic Schiff-base intermediate with substrate. Residue Ile-205 participates in pyruvate binding.

Belongs to the DapA family. As to quaternary structure, homotetramer; dimer of dimers.

Its subcellular location is the cytoplasm. The catalysed reaction is L-aspartate 4-semialdehyde + pyruvate = (2S,4S)-4-hydroxy-2,3,4,5-tetrahydrodipicolinate + H2O + H(+). It participates in amino-acid biosynthesis; L-lysine biosynthesis via DAP pathway; (S)-tetrahydrodipicolinate from L-aspartate: step 3/4. In terms of biological role, catalyzes the condensation of (S)-aspartate-beta-semialdehyde [(S)-ASA] and pyruvate to 4-hydroxy-tetrahydrodipicolinate (HTPA). In Dehalococcoides mccartyi (strain CBDB1), this protein is 4-hydroxy-tetrahydrodipicolinate synthase.